The chain runs to 243 residues: Triosephosphate isomerase (243 aa).

9 to 11 is a binding site for substrate; it reads NWK. H96 functions as the Electrophile in the catalytic mechanism. Catalysis depends on E165, which acts as the Proton acceptor. Residues G171, S204, and 225-226 contribute to the substrate site; that span reads GG.

The protein belongs to the triosephosphate isomerase family. In terms of assembly, homodimer.

The protein localises to the cytoplasm. The catalysed reaction is D-glyceraldehyde 3-phosphate = dihydroxyacetone phosphate. The protein operates within carbohydrate biosynthesis; gluconeogenesis. It functions in the pathway carbohydrate degradation; glycolysis; D-glyceraldehyde 3-phosphate from glycerone phosphate: step 1/1. Involved in the gluconeogenesis. Catalyzes stereospecifically the conversion of dihydroxyacetone phosphate (DHAP) to D-glyceraldehyde-3-phosphate (G3P). This chain is Triosephosphate isomerase, found in Prochlorococcus marinus (strain SARG / CCMP1375 / SS120).